Consider the following 606-residue polypeptide: DNA mismatch repair protein MutL (606 aa).

A disordered region spans residues 348-378 (QPHAQRPQAPWSAETSPFRPYPPAAGFSERP).

The protein belongs to the DNA mismatch repair MutL/HexB family.

This protein is involved in the repair of mismatches in DNA. It is required for dam-dependent methyl-directed DNA mismatch repair. May act as a 'molecular matchmaker', a protein that promotes the formation of a stable complex between two or more DNA-binding proteins in an ATP-dependent manner without itself being part of a final effector complex. This is DNA mismatch repair protein MutL from Rhizobium etli (strain CIAT 652).